The chain runs to 261 residues: Undecaprenyl-diphosphatase (261 aa).

Transmembrane regions (helical) follow at residues 39-59 (NVLL…LIIF), 76-96 (LLII…KDFF), 99-119 (LFVS…ILWL), 173-193 (AAKF…VLDL), 206-226 (IDLM…YFAV), and 238-258 (LTWF…LQAA).

Belongs to the UppP family.

It is found in the cell membrane. It carries out the reaction di-trans,octa-cis-undecaprenyl diphosphate + H2O = di-trans,octa-cis-undecaprenyl phosphate + phosphate + H(+). Catalyzes the dephosphorylation of undecaprenyl diphosphate (UPP). Confers resistance to bacitracin. The protein is Undecaprenyl-diphosphatase of Carboxydothermus hydrogenoformans (strain ATCC BAA-161 / DSM 6008 / Z-2901).